Here is a 262-residue protein sequence, read N- to C-terminus: Thiazole synthase (262 aa).

The Schiff-base intermediate with DXP role is filled by Lys104. 1-deoxy-D-xylulose 5-phosphate contacts are provided by residues Gly165, 191-192, and 213-214; these read AG and NT.

This sequence belongs to the ThiG family. In terms of assembly, homotetramer. Forms heterodimers with either ThiH or ThiS.

The protein localises to the cytoplasm. The enzyme catalyses [ThiS sulfur-carrier protein]-C-terminal-Gly-aminoethanethioate + 2-iminoacetate + 1-deoxy-D-xylulose 5-phosphate = [ThiS sulfur-carrier protein]-C-terminal Gly-Gly + 2-[(2R,5Z)-2-carboxy-4-methylthiazol-5(2H)-ylidene]ethyl phosphate + 2 H2O + H(+). The protein operates within cofactor biosynthesis; thiamine diphosphate biosynthesis. Its function is as follows. Catalyzes the rearrangement of 1-deoxy-D-xylulose 5-phosphate (DXP) to produce the thiazole phosphate moiety of thiamine. Sulfur is provided by the thiocarboxylate moiety of the carrier protein ThiS. In vitro, sulfur can be provided by H(2)S. This chain is Thiazole synthase, found in Alkalilimnicola ehrlichii (strain ATCC BAA-1101 / DSM 17681 / MLHE-1).